The following is a 427-amino-acid chain: Ectoine TRAP transporter large permease protein TeaC (427 aa).

Transmembrane regions (helical) follow at residues 13–35 (LLLG…FMMF), 49–69 (MAGI…AADI), 79–99 (LINM…VSTA), 103–123 (TLFG…GSPL), 147–167 (IAFL…SGTS), 172–192 (FIAG…YCVI), 216–236 (LALW…GGIF), 237–257 (SPTE…FVVF), 273–293 (GLIT…SWII), 320–340 (ICVA…ILVL), 356–376 (VLVG…PPFG), and 400–420 (FIFM…IALF).

The protein belongs to the TRAP transporter large permease family. In terms of assembly, the complex comprises the extracytoplasmic solute receptor protein TeaA, and the two transmembrane proteins TeaB and TeaC.

The protein localises to the cell inner membrane. Its function is as follows. Part of the tripartite ATP-independent periplasmic (TRAP) transport system TeaABC involved in the uptake of ectoine and hydroxyectoine in response to osmotic upshock. Probably functions as a recovery system for synthesized ectoine that leaks out of the cell. The chain is Ectoine TRAP transporter large permease protein TeaC (teaC) from Halomonas elongata (strain ATCC 33173 / DSM 2581 / NBRC 15536 / NCIMB 2198 / 1H9).